We begin with the raw amino-acid sequence, 336 residues long: 4-hydroxy-3-methylbut-2-enyl diphosphate reductase (336 aa).

Residue Cys-32 coordinates [4Fe-4S] cluster. Residues His-61 and His-94 each contribute to the (2E)-4-hydroxy-3-methylbut-2-enyl diphosphate site. Dimethylallyl diphosphate-binding residues include His-61 and His-94. Positions 61 and 94 each coordinate isopentenyl diphosphate. [4Fe-4S] cluster is bound at residue Cys-116. His-148 contributes to the (2E)-4-hydroxy-3-methylbut-2-enyl diphosphate binding site. A dimethylallyl diphosphate-binding site is contributed by His-148. His-148 serves as a coordination point for isopentenyl diphosphate. The Proton donor role is filled by Glu-150. Thr-189 lines the (2E)-4-hydroxy-3-methylbut-2-enyl diphosphate pocket. Cys-219 lines the [4Fe-4S] cluster pocket. Ser-247, Ser-248, Asn-249, and Ser-292 together coordinate (2E)-4-hydroxy-3-methylbut-2-enyl diphosphate. Dimethylallyl diphosphate is bound by residues Ser-247, Ser-248, Asn-249, and Ser-292. The isopentenyl diphosphate site is built by Ser-247, Ser-248, Asn-249, and Ser-292.

This sequence belongs to the IspH family. The cofactor is [4Fe-4S] cluster.

It catalyses the reaction isopentenyl diphosphate + 2 oxidized [2Fe-2S]-[ferredoxin] + H2O = (2E)-4-hydroxy-3-methylbut-2-enyl diphosphate + 2 reduced [2Fe-2S]-[ferredoxin] + 2 H(+). The catalysed reaction is dimethylallyl diphosphate + 2 oxidized [2Fe-2S]-[ferredoxin] + H2O = (2E)-4-hydroxy-3-methylbut-2-enyl diphosphate + 2 reduced [2Fe-2S]-[ferredoxin] + 2 H(+). It participates in isoprenoid biosynthesis; dimethylallyl diphosphate biosynthesis; dimethylallyl diphosphate from (2E)-4-hydroxy-3-methylbutenyl diphosphate: step 1/1. Its pathway is isoprenoid biosynthesis; isopentenyl diphosphate biosynthesis via DXP pathway; isopentenyl diphosphate from 1-deoxy-D-xylulose 5-phosphate: step 6/6. In terms of biological role, catalyzes the conversion of 1-hydroxy-2-methyl-2-(E)-butenyl 4-diphosphate (HMBPP) into a mixture of isopentenyl diphosphate (IPP) and dimethylallyl diphosphate (DMAPP). Acts in the terminal step of the DOXP/MEP pathway for isoprenoid precursor biosynthesis. In Gluconobacter oxydans (strain 621H) (Gluconobacter suboxydans), this protein is 4-hydroxy-3-methylbut-2-enyl diphosphate reductase.